Consider the following 342-residue polypeptide: tRNA dimethylallyltransferase (342 aa).

Residues 1–13 (MNDTTAKTLNCSP) are compositionally biased toward polar residues. The interval 1–21 (MNDTTAKTLNCSPASRDGFPE) is disordered. 40 to 47 (GPTGVGKT) is an ATP binding site. Substrate is bound at residue 42-47 (TGVGKT). Interaction with substrate tRNA stretches follow at residues 65–68 (DSMQ) and 189–193 (QRILR).

This sequence belongs to the IPP transferase family. Monomer. It depends on Mg(2+) as a cofactor.

The enzyme catalyses adenosine(37) in tRNA + dimethylallyl diphosphate = N(6)-dimethylallyladenosine(37) in tRNA + diphosphate. Catalyzes the transfer of a dimethylallyl group onto the adenine at position 37 in tRNAs that read codons beginning with uridine, leading to the formation of N6-(dimethylallyl)adenosine (i(6)A). The chain is tRNA dimethylallyltransferase from Syntrophobacter fumaroxidans (strain DSM 10017 / MPOB).